A 298-amino-acid polypeptide reads, in one-letter code: Syntenin-1 (298 aa).

The residue at position 2 (Ser-2) is an N-acetylserine. Residues 2–60 (SLYPSLEDLKVDKVIQAQTAFSANPANPAILSEASAPIPHDGNLYPRLYPELSQYMGLS) are interaction with PDCD6IP. Short sequence motifs (LYPX(n)L motif) lie at residues 3 to 7 (LYPSL), 45 to 49 (LYPRL), and 49 to 53 (LYPEL). The residue at position 6 (Ser-6) is a Phosphoserine. Tyr-46 carries the phosphotyrosine modification. 2 PDZ domains span residues 114–193 (EVIL…IRDR) and 198–273 (TITM…MPAF). Residues Asn-215 and 250 to 251 (KD) each bind a 1,2-diacyl-sn-glycero-3-phospho-(1D-myo-inositol-4,5-bisphosphate).

Monomer and homodimer. Interacts with SDC1, SDC2, SDC3, SDC4, NRXN2, EPHA7, EPHB1, NF2 isoform 1, TGFA and IL5RA. Interacts with NFASC and PTPRJ. Interacts with SDCBP2. Interacts with PDCD6IP. Forms a complex with PDCD6IP and SDC2. Interacts (via C-terminus) with TGFBR1. Binds to FZD7; this interaction is increased by inositol trisphosphate (IP3). Interacts with SMO. In terms of processing, phosphorylated on tyrosine residues. As to expression, expressed in lung cancers, including adenocarcinoma, squamous cell carcinoma and small-cell carcinoma (at protein level). Widely expressed. Expressed in fetal kidney, liver, lung and brain. In adult highest expression in heart and placenta.

The protein resides in the cell junction. The protein localises to the focal adhesion. Its subcellular location is the adherens junction. It is found in the cell membrane. It localises to the endoplasmic reticulum membrane. The protein resides in the nucleus. The protein localises to the melanosome. Its subcellular location is the cytoplasm. It is found in the cytosol. It localises to the cytoskeleton. The protein resides in the secreted. The protein localises to the extracellular exosome. Its subcellular location is the membrane raft. Functionally, multifunctional adapter protein involved in diverse array of functions including trafficking of transmembrane proteins, neuro and immunomodulation, exosome biogenesis, and tumorigenesis. Positively regulates TGFB1-mediated SMAD2/3 activation and TGFB1-induced epithelial-to-mesenchymal transition (EMT) and cell migration in various cell types. May increase TGFB1 signaling by enhancing cell-surface expression of TGFR1 by preventing the interaction between TGFR1 and CAV1 and subsequent CAV1-dependent internalization and degradation of TGFR1. In concert with SDC1/4 and PDCD6IP, regulates exosome biogenesis. Regulates migration, growth, proliferation, and cell cycle progression in a variety of cancer types. In adherens junctions may function to couple syndecans to cytoskeletal proteins or signaling components. Seems to couple transcription factor SOX4 to the IL-5 receptor (IL5RA). May also play a role in vesicular trafficking. Seems to be required for the targeting of TGFA to the cell surface in the early secretory pathway. The protein is Syntenin-1 (SDCBP) of Homo sapiens (Human).